We begin with the raw amino-acid sequence, 295 residues long: Phosphatidylglycerol--prolipoprotein diacylglyceryl transferase (295 aa).

The next 7 membrane-spanning stretches (helical) occupy residues 17–37 (IKVHWYGIMYLLGFTAAWLLG), 57–77 (LLFYAMLGVVLGGRIGYMLFY), 92–112 (VWDGGMSFHGGLLGVIAACWW), 127–147 (FMAPLVPLGLGFGRIGNFIGA), 196–216 (QLYEALLEGLVMFVVLWAVSA), 222–242 (YLVGGLFALMYGLFRFAVEFV), and 255–275 (WLTRGQILSLPLIAFGLVLLV). An a 1,2-diacyl-sn-glycero-3-phospho-(1'-sn-glycerol)-binding site is contributed by arginine 140.

The protein belongs to the Lgt family.

It localises to the cell inner membrane. The catalysed reaction is L-cysteinyl-[prolipoprotein] + a 1,2-diacyl-sn-glycero-3-phospho-(1'-sn-glycerol) = an S-1,2-diacyl-sn-glyceryl-L-cysteinyl-[prolipoprotein] + sn-glycerol 1-phosphate + H(+). It participates in protein modification; lipoprotein biosynthesis (diacylglyceryl transfer). In terms of biological role, catalyzes the transfer of the diacylglyceryl group from phosphatidylglycerol to the sulfhydryl group of the N-terminal cysteine of a prolipoprotein, the first step in the formation of mature lipoproteins. This is Phosphatidylglycerol--prolipoprotein diacylglyceryl transferase from Stenotrophomonas maltophilia (strain R551-3).